The chain runs to 234 residues: DNA repair protein RecO (234 aa).

Belongs to the RecO family.

Functionally, involved in DNA repair and RecF pathway recombination. This Idiomarina loihiensis (strain ATCC BAA-735 / DSM 15497 / L2-TR) protein is DNA repair protein RecO.